Reading from the N-terminus, the 462-residue chain is Exodeoxyribonuclease 7 large subunit (462 aa).

This sequence belongs to the XseA family. In terms of assembly, heterooligomer composed of large and small subunits.

It is found in the cytoplasm. It carries out the reaction Exonucleolytic cleavage in either 5'- to 3'- or 3'- to 5'-direction to yield nucleoside 5'-phosphates.. Its function is as follows. Bidirectionally degrades single-stranded DNA into large acid-insoluble oligonucleotides, which are then degraded further into small acid-soluble oligonucleotides. The chain is Exodeoxyribonuclease 7 large subunit from Pectobacterium carotovorum subsp. carotovorum (strain PC1).